The sequence spans 369 residues: Endophilin-A (369 aa).

The BAR domain occupies 18-248; the sequence is TEKMGGAEGT…LQEKRSEAES (231 aa). A coiled-coil region spans residues 227–247; that stretch reads QCADVLRGLQETLQEKRSEAE. Residues 275–294 show a composition bias toward low complexity; the sequence is GTPSHISSSASPLPSPMRSP. The segment at 275-296 is disordered; that stretch reads GTPSHISSSASPLPSPMRSPAK. Positions 305–364 constitute an SH3 domain; it reads QQQPCCQALYDFDPENPGELGFKENDIITLLNRVDDNWYEGAVNGRTGYFPQSYVQVQVP.

The protein belongs to the endophilin family.

Its subcellular location is the cytoplasm. It localises to the membrane. Required presynaptically at the neuromuscular junction. Implicated in synaptic vesicle endocytosis. This Drosophila pseudoobscura pseudoobscura (Fruit fly) protein is Endophilin-A.